A 37-amino-acid polypeptide reads, in one-letter code: Large ribosomal subunit protein bL36 (37 aa).

Belongs to the bacterial ribosomal protein bL36 family.

The polypeptide is Large ribosomal subunit protein bL36 (Tropheryma whipplei (strain Twist) (Whipple's bacillus)).